A 344-amino-acid chain; its full sequence is Nuclear distribution protein nudE-like 1-B (344 aa).

Residues lysine 13–glycine 190 are a coiled coil. Disordered stretches follow at residues arginine 186–serine 209 and proline 325–valine 344. The segment covering proline 333–valine 344 has biased composition (pro residues).

It belongs to the nudE family. Post-translationally, phosphorylated in mitosis.

It localises to the cytoplasm. The protein resides in the cytoskeleton. Its subcellular location is the microtubule organizing center. The protein localises to the centrosome. It is found in the spindle. Required for organization of the cellular microtubule array and microtubule anchoring at the centrosome. Positively regulates the activity of the minus-end directed microtubule motor protein dynein. May enhance dynein-mediated microtubule sliding by targeting dynein to the microtubule plus end. Positively regulates lysosome peripheral distribution and ruffled border formation in osteoclasts. The protein is Nuclear distribution protein nudE-like 1-B (ndel1-b) of Xenopus laevis (African clawed frog).